We begin with the raw amino-acid sequence, 491 residues long: Cytochrome P450 2F2 (491 aa).

Cys-436 lines the heme pocket.

The protein belongs to the cytochrome P450 family. The cofactor is heme. Club cells in lung and liver.

Its subcellular location is the endoplasmic reticulum membrane. It is found in the microsome membrane. In terms of biological role, involved in the regio- and stereoselective transformation of naphthalene to trans-1R-hydroxy-2R-glutathionyl-1,2-dihydronaphthalene in the presence of glutathione and glutathione S-transferases. It specifically catalyzes the production of a very reactive and potentially toxic intermediate, the 2R,2S arene oxide, that is associated with necrosis of the unciliated bronchiolar epithelial cells or club cells in lung. This is Cytochrome P450 2F2 (Cyp2f2) from Mus musculus (Mouse).